The sequence spans 718 residues: MRAVLETADIAIVALYFILVMCIGFFAMWKSNRSTVSGYFLAGRSMTWVAIGASLFVSNIGSEHFIGLAGSGAASGFAVGAWEFNALLLLQLLGWVFIPIYIRSGVYTMPEYLSKRFGGHRIQVYFAALSLILYIFTKLSVDLYSGALFIQESMGWNLYVSVILLIGMTALLTVTGGLVAVIYTDTLQALLMIVGALTLMVISMMEIGGFEEVKRRYMLASPNVTSILLTYNLSNTNSCNVHPKKDALKMLRNPTDEDVPWPGFILGQTPASVWYWCADQVIVQRVLAAKNIAHAKGSTLMAGFLKLLPMFIIVVPGMISRILFADDIACINPEHCMQVCGSRAGCSNIAYPRLVMKLVPVGLRGLMMAVMIAALMSDLDSIFNSASTIFTLDVYKLIRKSASSRELMIVGRIFVAFMVVISIAWVPIIVEMQGGQMYLYIQEVADYLTPPVAALFLLAIFWKRCNEQGAFYGGMAGFILVVVRLTLAFAYRAPECDQPDNRPVFIKDIHYMYVATALFWITGLITVIVSLLTPPPTKEQIRTTTFWSKKSLVVKESCSPKDEPYKMQEKSILRCSENSEVINHVIPNGKSEDSIKGLQPEDVNLLVTCREEGNPVASLGHSEAETPVDAYSNGQAALMGEKERKKEAEDGSRYWKFIDWFCGFKSKSLSKRSLRDLMEEEAVCLQMLEEPPQVKVILNIGLFGVCSLGIFMFVYFSL.

Residues 1–9 (MRAVLETAD) lie on the Extracellular side of the membrane. The helical transmembrane segment at 10–29 (IAIVALYFILVMCIGFFAMW) threads the bilayer. Over 30 to 38 (KSNRSTVSG) the chain is Cytoplasmic. Residues 39 to 57 (YFLAGRSMTWVAIGASLFV) traverse the membrane as a helical segment. Residues 58–86 (SNIGSEHFIGLAGSGAASGFAVGAWEFNA) lie on the Extracellular side of the membrane. The helical transmembrane segment at 87-110 (LLLLQLLGWVFIPIYIRSGVYTMP) threads the bilayer. Residues 111–123 (EYLSKRFGGHRIQ) are Cytoplasmic-facing. The chain crosses the membrane as a helical span at residues 124 to 144 (VYFAALSLILYIFTKLSVDLY). At 145-157 (SGALFIQESMGWN) the chain is on the extracellular side. Residues 158-183 (LYVSVILLIGMTALLTVTGGLVAVIY) traverse the membrane as a helical segment. Over 184-186 (TDT) the chain is Cytoplasmic. The chain crosses the membrane as a helical span at residues 187–205 (LQALLMIVGALTLMVISMM). Over 206–303 (EIGGFEEVKR…HAKGSTLMAG (98 aa)) the chain is Extracellular. The N-linked (GlcNAc...) asparagine glycan is linked to N232. A helical membrane pass occupies residues 304-324 (FLKLLPMFIIVVPGMISRILF). The Cytoplasmic segment spans residues 325–353 (ADDIACINPEHCMQVCGSRAGCSNIAYPR). The helical transmembrane segment at 354-376 (LVMKLVPVGLRGLMMAVMIAALM) threads the bilayer. Topologically, residues 377-406 (SDLDSIFNSASTIFTLDVYKLIRKSASSRE) are extracellular. A helical transmembrane segment spans residues 407–430 (LMIVGRIFVAFMVVISIAWVPIIV). The Cytoplasmic portion of the chain corresponds to 431–443 (EMQGGQMYLYIQE). A helical membrane pass occupies residues 444–462 (VADYLTPPVAALFLLAIFW). The Extracellular portion of the chain corresponds to 463 to 510 (KRCNEQGAFYGGMAGFILVVVRLTLAFAYRAPECDQPDNRPVFIKDIH). Residues 511-532 (YMYVATALFWITGLITVIVSLL) traverse the membrane as a helical segment. The Cytoplasmic portion of the chain corresponds to 533–695 (TPPPTKEQIR…QMLEEPPQVK (163 aa)). Phosphoserine is present on residues S594 and S632. The helical transmembrane segment at 696–716 (VILNIGLFGVCSLGIFMFVYF) threads the bilayer. Topologically, residues 717–718 (SL) are extracellular.

The protein belongs to the sodium:solute symporter (SSF) (TC 2.A.21) family. In terms of assembly, interacts with KCNQ2 (via the pore module). Interacts with KCNQ1; this interaction is direct. Forms coregulatory complexes with ion channels KCNQ2-KCNQ3 and KCNQ1-KCNE2.

Its subcellular location is the apical cell membrane. The protein resides in the basolateral cell membrane. In terms of biological role, electrogenic Na(+)-coupled sugar symporter that actively transports myo-inositol and its stereoisomer scyllo-inositol across the plasma membrane, with a Na(+) to sugar coupling ratio of 2:1. Maintains myo-inositol concentration gradient that defines cell volume and fluid balance during osmotic stress, in particular in the fetoplacental unit and central nervous system. Forms coregulatory complexes with voltage-gated K(+) ion channels, allosterically altering ion selectivity, voltage dependence and gating kinetics of the channel. In turn, K(+) efflux through the channel forms a local electrical gradient that modulates electrogenic Na(+)-coupled myo-inositol influx through the transporter. Associates with KCNQ1-KCNE2 channel in the apical membrane of choroid plexus epithelium and regulates the myo-inositol gradient between blood and cerebrospinal fluid with an impact on neuron excitability. Associates with KCNQ2-KCNQ3 channel altering ion selectivity, increasing Na(+) and Cs(+) permeation relative to K(+) permeation. Provides myo-inositol precursor for biosynthesis of phosphoinositides such as PI(4,5)P2, thus indirectly affecting the activity of phosphoinositide-dependent ion channels and Ca(2+) signaling upon osmotic stress. The sequence is that of Sodium/myo-inositol cotransporter (SLC5A3) from Bos taurus (Bovine).